Consider the following 385-residue polypeptide: FAD-dependent monooxygenase verC2 (385 aa).

The FAD site is built by arginine 27, aspartate 227, and alanine 240. N-linked (GlcNAc...) asparagine glycosylation occurs at asparagine 320. A helical transmembrane segment spans residues 365–385; the sequence is WKTTIMFIALLTIVVLIYSFI.

This sequence belongs to the paxM FAD-dependent monooxygenase family. FAD serves as cofactor.

It is found in the membrane. It participates in secondary metabolite biosynthesis; terpenoid biosynthesis. It functions in the pathway mycotoxin biosynthesis. FAD-dependent monooxygenase; part of the gene cluster that mediates the biosynthesis of the neurotoxin verrucosidin, a methylated alpha-pyrone polyketide that inhibits oxidative phosphorylation in mitochondria and thereby causes neurological diseases. The carbon backbone of verrucosidin is synthesized by the HR-PKS verA, and further modified by the other verrucodidin cluster enzymes. The polypeptide is FAD-dependent monooxygenase verC2 (Penicillium polonicum).